Consider the following 619-residue polypeptide: MPIQVLPPQLANQIAAGEVVERPASVVKELVENSLDAGATRIDIDIERGGAKLIRIRDNGSGIKKDELALALARHATSKIASLDDLEAIISLGFRGEALASISSVARLTLTSRTAEQQEAWQAYAEGRDQAVTVKPAAHPVGTTLEVLDLFYNTPARRKFMRTEKTEFGHIDEVVRRIALARFDVTINLSHNGKVMRQYRAVAQDGQRERRLGTICGAAFLEHALAIEWQHGDLTLRGWVADPLHTTPALAEIQYCYVNGRMMRDRLINHAIRQACEDKLGADQQPAFVLYLEIDPHQVDVNVHPAKHEVRFHQSRLVHDFIYQGVLSVLQQQLDAPLAEKDDPPAPRPMPENRIAAGGNQFARPAEAREPATRFSITPSREPAASSGKPGGASWPHAQPGYQKQQGALYRQLLDTPTSPKPALQPPAAAELAGHSQSFGRVLTIVGGDCALLEREGGLALLSLTVAERWLRQAQLTPGAEAVCAQPLLIPLRLKVTEGEKQALAAAQPALAQLGIDVHTDALHVTVRAVPLPLRQQNLQILIPELIGYLAQQNAFDVGNIAQWMARNLTSEQTSWNMAQAIALLADVERLCPQLVRTPPGGLLQPVDLHSAMNALKDE.

Residues 339 to 400 are disordered; it reads AEKDDPPAPR…GGASWPHAQP (62 aa).

The protein belongs to the DNA mismatch repair MutL/HexB family.

This protein is involved in the repair of mismatches in DNA. It is required for dam-dependent methyl-directed DNA mismatch repair. May act as a 'molecular matchmaker', a protein that promotes the formation of a stable complex between two or more DNA-binding proteins in an ATP-dependent manner without itself being part of a final effector complex. In Klebsiella pneumoniae subsp. pneumoniae (strain ATCC 700721 / MGH 78578), this protein is DNA mismatch repair protein MutL.